The following is a 522-amino-acid chain: Maturase K (522 aa).

This sequence belongs to the intron maturase 2 family. MatK subfamily.

Its subcellular location is the plastid. It localises to the chloroplast. Usually encoded in the trnK tRNA gene intron. Probably assists in splicing its own and other chloroplast group II introns. This is Maturase K from Watsonia angusta.